The sequence spans 475 residues: 3-isopropylmalate dehydratase large subunit (475 aa).

The [4Fe-4S] cluster site is built by Cys-347, Cys-407, and Cys-410. The disordered stretch occupies residues 418 to 442; it reads LAPGERSASTSNRNFEGRQGKGGRT.

Belongs to the aconitase/IPM isomerase family. LeuC type 1 subfamily. In terms of assembly, heterodimer of LeuC and LeuD. [4Fe-4S] cluster serves as cofactor.

The catalysed reaction is (2R,3S)-3-isopropylmalate = (2S)-2-isopropylmalate. It functions in the pathway amino-acid biosynthesis; L-leucine biosynthesis; L-leucine from 3-methyl-2-oxobutanoate: step 2/4. Catalyzes the isomerization between 2-isopropylmalate and 3-isopropylmalate, via the formation of 2-isopropylmaleate. This is 3-isopropylmalate dehydratase large subunit from Streptomyces griseus subsp. griseus (strain JCM 4626 / CBS 651.72 / NBRC 13350 / KCC S-0626 / ISP 5235).